Consider the following 239-residue polypeptide: Purine nucleoside phosphorylase DeoD-type (239 aa).

His-5 provides a ligand contact to a purine D-ribonucleoside. Phosphate is bound by residues Gly-21, Arg-25, Arg-44, and Arg-88–Ser-91. A purine D-ribonucleoside is bound by residues Glu-180–Glu-182 and Ser-204–Asp-205. Asp-205 serves as the catalytic Proton donor.

It belongs to the PNP/UDP phosphorylase family. Homohexamer; trimer of homodimers.

It catalyses the reaction a purine D-ribonucleoside + phosphate = a purine nucleobase + alpha-D-ribose 1-phosphate. The catalysed reaction is a purine 2'-deoxy-D-ribonucleoside + phosphate = a purine nucleobase + 2-deoxy-alpha-D-ribose 1-phosphate. Functionally, catalyzes the reversible phosphorolytic breakdown of the N-glycosidic bond in the beta-(deoxy)ribonucleoside molecules, with the formation of the corresponding free purine bases and pentose-1-phosphate. This chain is Purine nucleoside phosphorylase DeoD-type, found in Salmonella arizonae (strain ATCC BAA-731 / CDC346-86 / RSK2980).